The chain runs to 273 residues: Exosome complex component MTR3 (273 aa).

Residues methionine 1–leucine 36 are disordered.

This sequence belongs to the RNase PH family. Component of the RNA exosome core complex (Exo-9), composed of EXOSC1, EXOSC2, EXOSC3, EXOSC4, EXOSC5, EXOSC6, EXOSC7, EXOSC8 and EXOSC9; within the complex interacts with EXOSC1, EXOSC7 and EXOSC8. The catalytically inactive RNA exosome core complex (Exo-9) associates with the catalytic subunit EXOSC10/RRP6. Exo-9 may associate with DIS3 to form the nucleolar exosome complex, or DIS3L to form the cytoplasmic exosome complex. Exo-9 is formed by a hexameric base ring consisting of the heterodimers EXOSC4-EXOSC9, EXOSC5-EXOSC8 and EXOSC6-EXOSC7, and a cap ring consisting of EXOSC1, EXOSC2 and EXOSC3. The RNA exosome complex associates with cofactors EXOSC10/RRP6, C1D/RRP47, MPHOSPH6/MPP6 and MTREX/MTR4.

The protein localises to the cytoplasm. It localises to the nucleus. Its subcellular location is the nucleolus. In terms of biological role, non-catalytic component of the RNA exosome complex which has 3'-&gt;5' exoribonuclease activity and participates in a multitude of cellular RNA processing and degradation events. In the nucleus, the RNA exosome complex is involved in proper maturation of stable RNA species such as rRNA, snRNA and snoRNA, in the elimination of RNA processing by-products and non-coding 'pervasive' transcripts, such as antisense RNA species and promoter-upstream transcripts (PROMPTs), and of mRNAs with processing defects, thereby limiting or excluding their export to the cytoplasm. The RNA exosome may be involved in Ig class switch recombination (CSR) and/or Ig variable region somatic hypermutation (SHM) by targeting AICDA deamination activity to transcribed dsDNA substrates. In the cytoplasm, the RNA exosome complex is involved in general mRNA turnover and specifically degrades inherently unstable mRNAs containing AU-rich elements (AREs) within their 3' untranslated regions, and in RNA surveillance pathways, preventing translation of aberrant mRNAs. It seems to be involved in degradation of histone mRNA. The catalytic inactive RNA exosome core complex of 9 subunits (Exo-9) is proposed to play a pivotal role in the binding and presentation of RNA for ribonucleolysis, and to serve as a scaffold for the association with catalytic subunits and accessory proteins or complexes. The chain is Exosome complex component MTR3 (Exosc6) from Mus musculus (Mouse).